The primary structure comprises 912 residues: Brevican core protein (912 aa).

Positions 1-22 are cleaved as a signal peptide; the sequence is MAPLFLPLLATLVLAWIPVALA. The region spanning 36–155 is the Ig-like V-type domain; the sequence is RVRIAGDAPL…SSDAVEVKVK (120 aa). 5 disulfides stabilise this stretch: cysteine 57-cysteine 137, cysteine 179-cysteine 250, cysteine 203-cysteine 224, cysteine 277-cysteine 352, and cysteine 301-cysteine 322. Asparagine 130 carries N-linked (GlcNAc...) asparagine glycosylation. 2 Link domains span residues 157–252 and 257–354; these read VVFL…YCYA and GELF…YCFR. The N-linked (GlcNAc...) asparagine glycan is linked to asparagine 337. Disordered stretches follow at residues 408–427 and 438–651; these read IPII…PAEA and SIVP…SGDC. Serine 418 bears the Phosphoserine mark. An O-linked (Xyl...) (chondroitin sulfate) serine glycan is attached at serine 418. The segment covering 448–463 has biased composition (basic and acidic residues); the sequence is EEGKVLEQEEKYRGEE. Acidic residues predominate over residues 464–478; it reads EKEEEEEEEEVEDEA. Positions 520–537 are enriched in pro residues; it reads VSPPPYDEPEAPRPPRVL. Positions 603–617 are enriched in basic and acidic residues; the sequence is GDTRDLETPSEENSR. The EGF-like domain maps to 647-683; the sequence is SSGDCVPSPCHNGGTCLEEEEGVRCLCLPGYGGDLCD. 8 cysteine pairs are disulfide-bonded: cysteine 651/cysteine 662, cysteine 656/cysteine 671, cysteine 673/cysteine 682, cysteine 689/cysteine 700, cysteine 717/cysteine 809, cysteine 785/cysteine 801, cysteine 816/cysteine 859, and cysteine 845/cysteine 872. Positions 683–811 constitute a C-type lectin domain; the sequence is DVGLHFCSPG…NYHLSYTCKM (129 aa). The 61-residue stretch at 814–874 folds into the Sushi domain; the sequence is VSCGPPPELP…WGLPQISCVP (61 aa).

It belongs to the aggrecan/versican proteoglycan family. Interacts with TNR. O-glycosylated; contains chondroitin sulfate. As to expression, brain; expressed in cerebellar astrocytes but not in neurons.

It is found in the secreted. The protein localises to the extracellular space. It localises to the extracellular matrix. Its function is as follows. May play a role in the terminally differentiating and the adult nervous system during postnatal development. Could stabilize interactions between hyaluronan (HA) and brain proteoglycans. This chain is Brevican core protein (BCAN), found in Bos taurus (Bovine).